A 668-amino-acid polypeptide reads, in one-letter code: Transketolase (668 aa).

Residue His-28 coordinates substrate. Thiamine diphosphate-binding positions include His-68 and 116–118 (GPL). Residue Asp-157 coordinates Mg(2+). Residues Gly-158 and Asn-187 each coordinate thiamine diphosphate. Mg(2+) contacts are provided by Asn-187 and Ile-189. The substrate site is built by His-263, Arg-358, and Ser-385. His-263 is a thiamine diphosphate binding site. Catalysis depends on Glu-412, which acts as the Proton donor. A thiamine diphosphate-binding site is contributed by Phe-438. Substrate is bound by residues His-462, Asp-470, His-474, and Arg-521.

The protein belongs to the transketolase family. In terms of assembly, homodimer. Requires Mg(2+) as cofactor. The cofactor is thiamine diphosphate.

It catalyses the reaction D-sedoheptulose 7-phosphate + D-glyceraldehyde 3-phosphate = aldehydo-D-ribose 5-phosphate + D-xylulose 5-phosphate. In terms of biological role, catalyzes the transfer of a two-carbon ketol group from a ketose donor to an aldose acceptor, likely via a covalent intermediate with the cofactor thiamine pyrophosphate. Can use L-erythrulose as donor and D-ribose-5-phosphate as acceptor substrates, forming glycolaldehyde and D-sedoheptulose-7-phosphate. For synthetic purposes, is able to use hydroxypyruvate (HPA) as donor substrate, making the reaction irreversible due to the release of carbon dioxide, and various aldehydes as acceptor substrates, which leads to the corresponding ketoses. Thus, using hydroxypyruvate as donor and three different aldehydes as acceptors, i.e. glycolaldehyde, D-glyceraldehyde and butyraldehyde, the enzyme stereoselectively forms the corresponding products L-erythrulose, D-xylulose and (3S)-1,3-dihydroxyhexan-2-one, respectively. This Geobacillus stearothermophilus (Bacillus stearothermophilus) protein is Transketolase.